A 501-amino-acid polypeptide reads, in one-letter code: Calcium-dependent protein kinase 4 (501 aa).

The region spanning 25 to 283 is the Protein kinase domain; that stretch reads YLLGKKLGQG…AHEALCHPWI (259 aa). ATP is bound by residues 31–39 and Lys54; that span reads LGQGQFGTT. Asp149 (proton acceptor) is an active-site residue. At Ser189 the chain carries Phosphoserine. The tract at residues 289–319 is autoinhibitory domain; sequence APDKPLDPAVLSRLKQFSQMNKIKKMALRVI. EF-hand domains are found at residues 326 to 361, 362 to 397, 398 to 433, and 437 to 467; these read EEIGGLKELFKMIDTDNSGTITFEELKAGLKRVGSE, LMESEIKSLMDAADIDNSGTIDYGEFLAATLHINKM, EREENLVVAFSYFDKDGSGYITIDELQQACTEFGLC, and LDDMIKEIDLDNDGKIDFSEFTAMMKKGDGV. Residues Asp339, Asp341, Ser343, Thr345, Glu350, Asp375, Asp377, Ser379, Thr381, Glu386, Asp411, Asp413, Ser415, Tyr417, Glu422, Asp445, Asp447, Asp449, Lys451, and Glu456 each coordinate Ca(2+).

This sequence belongs to the protein kinase superfamily. Ser/Thr protein kinase family. CDPK subfamily. In terms of assembly, interacts with Di19.

The protein resides in the cytoplasm. Its subcellular location is the nucleus. It carries out the reaction L-seryl-[protein] + ATP = O-phospho-L-seryl-[protein] + ADP + H(+). It catalyses the reaction L-threonyl-[protein] + ATP = O-phospho-L-threonyl-[protein] + ADP + H(+). Activated by calcium. Autophosphorylation may play an important role in the regulation of the kinase activity. Functionally, may play a role in signal transduction pathways that involve calcium as a second messenger. Functions as a regulator of the calcium-mediated abscisic acid (ABA) signaling pathway. Phosphorylates ABA-responsive transcription factors ABF1 and ABF4 in vitro. Phosphorylates the nuclear zinc finger Di19 in vitro. The protein is Calcium-dependent protein kinase 4 (CPK4) of Arabidopsis thaliana (Mouse-ear cress).